Consider the following 342-residue polypeptide: Methionyl-tRNA formyltransferase (342 aa).

A (6S)-5,6,7,8-tetrahydrofolate-binding site is contributed by 110-113 (SLLP).

This sequence belongs to the Fmt family.

It catalyses the reaction L-methionyl-tRNA(fMet) + (6R)-10-formyltetrahydrofolate = N-formyl-L-methionyl-tRNA(fMet) + (6S)-5,6,7,8-tetrahydrofolate + H(+). Functionally, attaches a formyl group to the free amino group of methionyl-tRNA(fMet). The formyl group appears to play a dual role in the initiator identity of N-formylmethionyl-tRNA by promoting its recognition by IF2 and preventing the misappropriation of this tRNA by the elongation apparatus. In Synechococcus sp. (strain CC9311), this protein is Methionyl-tRNA formyltransferase.